We begin with the raw amino-acid sequence, 421 residues long: Gamma-glutamyl phosphate reductase (421 aa).

This sequence belongs to the gamma-glutamyl phosphate reductase family.

Its subcellular location is the cytoplasm. It catalyses the reaction L-glutamate 5-semialdehyde + phosphate + NADP(+) = L-glutamyl 5-phosphate + NADPH + H(+). It participates in amino-acid biosynthesis; L-proline biosynthesis; L-glutamate 5-semialdehyde from L-glutamate: step 2/2. Functionally, catalyzes the NADPH-dependent reduction of L-glutamate 5-phosphate into L-glutamate 5-semialdehyde and phosphate. The product spontaneously undergoes cyclization to form 1-pyrroline-5-carboxylate. The polypeptide is Gamma-glutamyl phosphate reductase (Acinetobacter baumannii (strain SDF)).